Here is a 162-residue protein sequence, read N- to C-terminus: 2-C-methyl-D-erythritol 2,4-cyclodiphosphate synthase (162 aa).

A divalent metal cation contacts are provided by D9 and H11. Residues 9–11 (DVH) and 35–36 (HS) contribute to the 4-CDP-2-C-methyl-D-erythritol 2-phosphate site. Position 43 (H43) interacts with a divalent metal cation. Residues 57 to 59 (DIG), 62 to 66 (FPDTD), 133 to 136 (TTTE), F140, and R143 each bind 4-CDP-2-C-methyl-D-erythritol 2-phosphate.

It belongs to the IspF family. As to quaternary structure, homotrimer. The cofactor is a divalent metal cation.

It catalyses the reaction 4-CDP-2-C-methyl-D-erythritol 2-phosphate = 2-C-methyl-D-erythritol 2,4-cyclic diphosphate + CMP. It functions in the pathway isoprenoid biosynthesis; isopentenyl diphosphate biosynthesis via DXP pathway; isopentenyl diphosphate from 1-deoxy-D-xylulose 5-phosphate: step 4/6. In terms of biological role, involved in the biosynthesis of isopentenyl diphosphate (IPP) and dimethylallyl diphosphate (DMAPP), two major building blocks of isoprenoid compounds. Catalyzes the conversion of 4-diphosphocytidyl-2-C-methyl-D-erythritol 2-phosphate (CDP-ME2P) to 2-C-methyl-D-erythritol 2,4-cyclodiphosphate (ME-CPP) with a corresponding release of cytidine 5-monophosphate (CMP). The polypeptide is 2-C-methyl-D-erythritol 2,4-cyclodiphosphate synthase (Histophilus somni (strain 2336) (Haemophilus somnus)).